A 423-amino-acid chain; its full sequence is Probable sucrose-phosphatase 3b (423 aa).

The protein belongs to the sucrose phosphatase family. In terms of assembly, homodimer. Mg(2+) serves as cofactor.

The catalysed reaction is sucrose 6(F)-phosphate + H2O = sucrose + phosphate. Its pathway is glycan biosynthesis; sucrose biosynthesis; sucrose from D-fructose 6-phosphate and UDP-alpha-D-glucose: step 2/2. Its function is as follows. Catalyzes the final step of sucrose synthesis. The sequence is that of Probable sucrose-phosphatase 3b (SPP3B) from Arabidopsis thaliana (Mouse-ear cress).